A 442-amino-acid polypeptide reads, in one-letter code: Exodeoxyribonuclease 7 large subunit (442 aa).

This sequence belongs to the XseA family. In terms of assembly, heterooligomer composed of large and small subunits.

Its subcellular location is the cytoplasm. The enzyme catalyses Exonucleolytic cleavage in either 5'- to 3'- or 3'- to 5'-direction to yield nucleoside 5'-phosphates.. In terms of biological role, bidirectionally degrades single-stranded DNA into large acid-insoluble oligonucleotides, which are then degraded further into small acid-soluble oligonucleotides. This is Exodeoxyribonuclease 7 large subunit from Shewanella woodyi (strain ATCC 51908 / MS32).